Here is a 266-residue protein sequence, read N- to C-terminus: MSNFIFGRYLPLDSVVHRLDPRAKLMLSFCYIIVVFLANNIWSYAILIAFTVGAILSSKISLGFFLKGIRPLLWLIVFTVVLQLLFSPAGGHTYFHWAFINVTQDGLINAGYIFVRFLLIIMMSTLLTLSTQPLDIATGLASLMKPLRWVKVPVDTLAMMLSIALRFVPTLMDEATKIMNAQRARGVDFGEGGLFKQAKSLIPLMVPLFMSAFNRAEDLSTAMEARGYQDSEHRSQYRILTWQRRDTVTWLLFLLGFVAILIFRHW.

5 consecutive transmembrane segments (helical) span residues 32–52 (IIVVFLANNIWSYAILIAFTV), 71–91 (PLLWLIVFTVVLQLLFSPAGG), 107–127 (LINAGYIFVRFLLIIMMSTLL), 152–172 (VPVDTLAMMLSIALRFVPTLM), and 246–266 (DTVTWLLFLLGFVAILIFRHW).

It belongs to the energy-coupling factor EcfT family. Forms a stable energy-coupling factor (ECF) transporter complex composed of 2 membrane-embedded substrate-binding proteins (S component), 2 ATP-binding proteins (A component) and 2 transmembrane proteins (T component). May be able to interact with more than 1 S component at a time.

The protein resides in the cell membrane. Its function is as follows. Transmembrane (T) component of an energy-coupling factor (ECF) ABC-transporter complex. Unlike classic ABC transporters this ECF transporter provides the energy necessary to transport a number of different substrates. The chain is Energy-coupling factor transporter transmembrane protein EcfT from Levilactobacillus brevis (strain ATCC 367 / BCRC 12310 / CIP 105137 / JCM 1170 / LMG 11437 / NCIMB 947 / NCTC 947) (Lactobacillus brevis).